A 452-amino-acid chain; its full sequence is Biotin carboxylase (452 aa).

Residues 1 to 445 (MFKKVLIANR…TTAFVTNHLK (445 aa)) enclose the Biotin carboxylation domain. ATP contacts are provided by residues lysine 116, lysine 158, 164-165 (GG), 200-203 (EKAV), histidine 208, and histidine 235. Residues 120–317 (RTAMQTAGVP…LVEWQLLIAA (198 aa)) enclose the ATP-grasp domain. Residue lysine 237 coordinates hydrogencarbonate. Positions 275 and 288 each coordinate ATP. Positions 275, 288, and 290 each coordinate Mg(2+). 3 residues coordinate Mn(2+): glutamate 275, glutamate 288, and asparagine 290. Hydrogencarbonate is bound by residues arginine 292, valine 295, and arginine 338. Arginine 292 is a catalytic residue. Arginine 338 is a biotin binding site.

In terms of assembly, acetyl-CoA carboxylase is a heterohexamer of biotin carboxyl carrier protein, biotin carboxylase and the two subunits of carboxyl transferase in a 2:2 complex. It depends on Mg(2+) as a cofactor. Requires Mn(2+) as cofactor.

The catalysed reaction is N(6)-biotinyl-L-lysyl-[protein] + hydrogencarbonate + ATP = N(6)-carboxybiotinyl-L-lysyl-[protein] + ADP + phosphate + H(+). Its pathway is lipid metabolism; malonyl-CoA biosynthesis; malonyl-CoA from acetyl-CoA: step 1/1. In terms of biological role, this protein is a component of the acetyl coenzyme A carboxylase complex; first, biotin carboxylase catalyzes the carboxylation of the carrier protein and then the transcarboxylase transfers the carboxyl group to form malonyl-CoA. The polypeptide is Biotin carboxylase (accC) (Halalkalibacterium halodurans (strain ATCC BAA-125 / DSM 18197 / FERM 7344 / JCM 9153 / C-125) (Bacillus halodurans)).